The chain runs to 631 residues: Acurin A biosynthesis cluster transcription regulator (631 aa).

The span at M1–H11 shows a compositional bias: polar residues. The tract at residues M1 to Q28 is disordered. A DNA-binding region (zn(2)-C6 fungal-type) is located at residues C30–C62. 3 disordered regions span residues Y64–R141, C489–T522, and H536–P573. Positions I88 to R99 are enriched in basic and acidic residues. Residues N119 to A128 show a composition bias toward polar residues.

The protein resides in the nucleus. In terms of biological role, transcription factor that positively regulates the expression of the cluster that mediates the biosynthesis of acurin A, a highly reduced polyketide coupled to a serine via a peptide bond. This Aspergillus aculeatus (strain ATCC 16872 / CBS 172.66 / WB 5094) protein is Acurin A biosynthesis cluster transcription regulator.